The primary structure comprises 328 residues: MPVVHCSSNLPITPYIYERLVYFIKASSISSCISDNLLLVNKTFNDGGCPPHINFCNDEIINPTAGQTVVELVLNAKKGELGSGYLAVDHGKKVVILAFRGSTTRQDWFSDFEIYPVNYSPLCVKEYRKLIEEGKIRECEGCKMHRGFLRFTETLGMDVFKKMESILESFPEYRIVVTGHSLGAALASLAGIELKIRGFDPLVLTFATPKIFNSEMKQWVDELFETDAIEKESILKDEIQFRKGYFRVVHTGDYIPMVPPFYHPAGLEMFINKVGLPQNAEDIEYRGKNNRLTLKDGFREGMSGLVEDWLHVYEHRAYFIDVVGCSGL.

Serine 181 (nucleophile) is an active-site residue. Residues aspartate 253 and histidine 315 each act as charge relay system in the active site.

This sequence belongs to the AB hydrolase superfamily. Lipase family.

It catalyses the reaction a triacylglycerol + H2O = a diacylglycerol + a fatty acid + H(+). Functionally, lipases catalyze the hydrolysis of the ester bond of tri-, di- and monoglycerides of long-chain fatty acids into fatty acids and glycerol. This Saccharomyces cerevisiae (strain ATCC 204508 / S288c) (Baker's yeast) protein is Putative lipase LIH1.